A 170-amino-acid polypeptide reads, in one-letter code: Urease accessory protein UreE (170 aa).

This sequence belongs to the UreE family.

Its subcellular location is the cytoplasm. Its function is as follows. Involved in urease metallocenter assembly. Binds nickel. Probably functions as a nickel donor during metallocenter assembly. This is Urease accessory protein UreE from Helicobacter pylori (strain ATCC 700392 / 26695) (Campylobacter pylori).